Here is a 429-residue protein sequence, read N- to C-terminus: Zinc finger protein 275 (429 aa).

The interval 31 to 95 (VSDPSPNTDP…DGKRGSPQNL (65 aa)) is disordered. The segment covering 34-51 (PSPNTDPAKYSESTSATR) has biased composition (polar residues). The residue at position 76 (S76) is a Phosphoserine. Positions 79–89 (FRQHGDSDGKR) are enriched in basic and acidic residues. 2 consecutive C2H2-type zinc fingers follow at residues 101–123 (FACK…QRVH) and 129–151 (WECG…RKSH). Positions 149–176 (KSHVAAEPQPGPSRALENAAEKREQMER) are disordered. The segment covering 167 to 176 (AAEKREQMER) has biased composition (basic and acidic residues). 9 C2H2-type zinc fingers span residues 181–203 (FECE…LRVH), 209–231 (FDCE…QKLH), 237–259 (FACK…QRMH), 265–287 (FDCD…QRIH), 293–315 (YGCP…RRIH), 321–343 (YACG…ARIH), 349–371 (YACG…RRIH), 377–399 (YECD…RRIH), and 405–427 (CECS…QPTH).

Belongs to the krueppel C2H2-type zinc-finger protein family.

The protein resides in the nucleus. In terms of biological role, may be involved in transcriptional regulation. This Homo sapiens (Human) protein is Zinc finger protein 275 (ZNF275).